Reading from the N-terminus, the 556-residue chain is Formate--tetrahydrofolate ligase (556 aa).

65–72 contacts ATP; it reads TPAGEGKT.

The protein belongs to the formate--tetrahydrofolate ligase family.

It catalyses the reaction (6S)-5,6,7,8-tetrahydrofolate + formate + ATP = (6R)-10-formyltetrahydrofolate + ADP + phosphate. Its pathway is one-carbon metabolism; tetrahydrofolate interconversion. This Clostridium acidurici (Gottschalkia acidurici) protein is Formate--tetrahydrofolate ligase.